The chain runs to 1168 residues: DNA-directed RNA polymerase subunit beta (1168 aa).

This sequence belongs to the RNA polymerase beta chain family. The RNAP catalytic core consists of 2 alpha, 1 beta, 1 beta' and 1 omega subunit. When a sigma factor is associated with the core the holoenzyme is formed, which can initiate transcription.

It catalyses the reaction RNA(n) + a ribonucleoside 5'-triphosphate = RNA(n+1) + diphosphate. Functionally, DNA-dependent RNA polymerase catalyzes the transcription of DNA into RNA using the four ribonucleoside triphosphates as substrates. The chain is DNA-directed RNA polymerase subunit beta from Rhodococcus jostii (strain RHA1).